The primary structure comprises 506 residues: Maturase K (506 aa).

This sequence belongs to the intron maturase 2 family. MatK subfamily.

It is found in the plastid. It localises to the chloroplast. Usually encoded in the trnK tRNA gene intron. Probably assists in splicing its own and other chloroplast group II introns. In Pisum sativum (Garden pea), this protein is Maturase K.